Consider the following 158-residue polypeptide: U4/U6.U5 small nuclear ribonucleoprotein 27 kDa protein (158 aa).

The segment at 1–102 (MGRSRSRSPE…AEDLEGKTEE (102 aa)) is disordered. Residues 13–59 (RERRRSRSASRERERRRRERSRSRERRRSRSRSPHRRRSRSPRRHRS) show a composition bias toward basic residues. Positions 66-101 (RLKDRRDDDKKEPKESKGGGSKERQLAAEDLEGKTE) are enriched in basic and acidic residues.

It belongs to the SNUT3 family. In terms of assembly, part of a tri-snRNP complex.

It is found in the nucleus. In terms of biological role, may play a role in mRNA splicing. The sequence is that of U4/U6.U5 small nuclear ribonucleoprotein 27 kDa protein (snrnp27) from Xenopus laevis (African clawed frog).